We begin with the raw amino-acid sequence, 90 residues long: Putative membrane protein insertion efficiency factor (90 aa).

Belongs to the UPF0161 family.

The protein localises to the cell membrane. In terms of biological role, could be involved in insertion of integral membrane proteins into the membrane. The polypeptide is Putative membrane protein insertion efficiency factor (Oceanobacillus iheyensis (strain DSM 14371 / CIP 107618 / JCM 11309 / KCTC 3954 / HTE831)).